A 311-amino-acid chain; its full sequence is MKKTPVVVIVGPTAVGKTKTGIELAKAFDGEIVSGDSVQVYRGMDIGSAKVTKEEAEGIPHHLIDICDPDDAMSVAMFQQLARAAIDDIYARGKLPIIVGGTGLYIRSILYDYEFVERPVDEALREELERLAEVEGREALHQRLVQLDPERAATIHPNNVRRVVRALEVAMQGDTQTTDSAPSEHYDYRLFVLHADREILYDRINQRVDAMMEAGLVEEVERLLAQGYRDTQAMRAIGYKEIIPYVEGKISKDRATDLLKQHTRQFAKRQLTWFRHQFDGIWVDMGRKSFELSYKNIYDDVEGFFRKFRLF.

ATP is bound at residue 11-18 (GPTAVGKT). Residue 13–18 (TAVGKT) participates in substrate binding. Residues 36–39 (DSVQ) are interaction with substrate tRNA.

The protein belongs to the IPP transferase family. In terms of assembly, monomer. Mg(2+) serves as cofactor.

It catalyses the reaction adenosine(37) in tRNA + dimethylallyl diphosphate = N(6)-dimethylallyladenosine(37) in tRNA + diphosphate. In terms of biological role, catalyzes the transfer of a dimethylallyl group onto the adenine at position 37 in tRNAs that read codons beginning with uridine, leading to the formation of N6-(dimethylallyl)adenosine (i(6)A). This is tRNA dimethylallyltransferase from Exiguobacterium sp. (strain ATCC BAA-1283 / AT1b).